Here is a 246-residue protein sequence, read N- to C-terminus: Large ribosomal subunit protein uL4 (246 aa).

The segment at 37–103 is disordered; sequence AAQANRKQDY…TEKDRSLDLN (67 aa). Residues 92–103 show a composition bias toward basic and acidic residues; that stretch reads PKTEKDRSLDLN.

Belongs to the universal ribosomal protein uL4 family. As to quaternary structure, part of the 50S ribosomal subunit. Interacts weakly with proteins L18e, L24 and L37e. Has been cross-linked to L18e.

One of the primary rRNA binding proteins, this protein initially binds near the 5'-end of the 23S rRNA. It is important during the early stages of 50S assembly. In terms of biological role, makes multiple contacts with different domains of the 23S rRNA in the assembled 50S subunit. Functionally, forms part of the polypeptide exit tunnel, in which it helps forms a bend with protein L22. Contacts the macrolide antibiotic spiramycin in the polypeptide exit tunnel. This is Large ribosomal subunit protein uL4 (rpl4) from Haloarcula marismortui (strain ATCC 43049 / DSM 3752 / JCM 8966 / VKM B-1809) (Halobacterium marismortui).